The sequence spans 349 residues: Protein RecA (349 aa).

65-72 (GPESSGKT) serves as a coordination point for ATP.

The protein belongs to the RecA family.

It localises to the cytoplasm. In terms of biological role, can catalyze the hydrolysis of ATP in the presence of single-stranded DNA, the ATP-dependent uptake of single-stranded DNA by duplex DNA, and the ATP-dependent hybridization of homologous single-stranded DNAs. It interacts with LexA causing its activation and leading to its autocatalytic cleavage. The sequence is that of Protein RecA from Acinetobacter baumannii (strain AB307-0294).